We begin with the raw amino-acid sequence, 694 residues long: Follicle-stimulating hormone receptor (694 aa).

The first 17 residues, 1-17, serve as a signal peptide directing secretion; it reads MAFLWISFLVFLGSGSG. 2 cysteine pairs are disulfide-bonded: cysteine 18–cysteine 25 and cysteine 23–cysteine 32. In terms of domain architecture, LRRNT spans 18 to 46; that stretch reads CHHRICHCSDRVFICQESKVTEIPSDIPR. The Extracellular segment spans residues 18 to 367; the sequence is CHHRICHCSD…EDIMGYNFLR (350 aa). LRR repeat units lie at residues 49 to 72, 73 to 97, 98 to 118, 119 to 143, 144 to 169, 170 to 192, 193 to 216, 217 to 240, and 241 to 259; these read VEMR…FRDL, EKIE…LPKL, HEIR…AFWN, LPNL…KIQS, HQKV…AGLS, SESE…AFNG, TQLD…IFQG, ANGP…GLKN, and LKKL…PNLD. N-linked (GlcNAc...) asparagine glycosylation is found at asparagine 191 and asparagine 199. Asparagine 268 carries an N-linked (GlcNAc...) asparagine glycan. Disulfide bonds link cysteine 275-cysteine 347, cysteine 276-cysteine 292, cysteine 276-cysteine 357, and cysteine 292-cysteine 339. An N-linked (GlcNAc...) asparagine glycan is attached at asparagine 293. The residue at position 336 (tyrosine 336) is a Sulfotyrosine. The chain crosses the membrane as a helical span at residues 368–388; it reads VLIWFISILSITGNIVVLVIL. Over 389 to 399 the chain is Cytoplasmic; the sequence is ITSQYKLTVPR. Residues 400–422 form a helical membrane-spanning segment; sequence FLMCNLAFADLCIGIYLLLIASV. Topologically, residues 423–444 are extracellular; sequence DIHTKSQYHNYAIDWQTGAGCD. Cysteine 443 and cysteine 518 are disulfide-bonded. Residues 445–466 form a helical membrane-spanning segment; the sequence is AAGFFTVFASELSVYTLTAITL. At 467–486 the chain is on the cytoplasmic side; it reads ERWHTITYAMQLDRKVRLRH. The chain crosses the membrane as a helical span at residues 487–509; it reads AASIMLIGWIFAFSVALLPIFGV. At 510–529 the chain is on the extracellular side; sequence SSYMKVSICLPMDIDSPLSQ. A helical transmembrane segment spans residues 530-551; it reads FYVISLLVLNVLASVIICTCYT. The Cytoplasmic segment spans residues 552–574; it reads HIYFTVRNPNIISSTSDAKIAKR. A helical membrane pass occupies residues 575-598; sequence MAMLIFTDFLCMAPISFFAISASV. At 599-609 the chain is on the extracellular side; the sequence is KMPLITVSKSK. Residues 610–631 traverse the membrane as a helical segment; that stretch reads ILLVLFYPINSCANPFLYAVFT. Residues 632-694 lie on the Cytoplasmic side of the membrane; the sequence is KTFRRDFFIL…YKLVPLNHLS (63 aa).

Belongs to the G-protein coupled receptor 1 family. FSH/LSH/TSH subfamily. As to quaternary structure, homotrimer. Functions as a homotrimer binding the FSH hormone heterodimer composed of CGA and FSHB. Interacts with ARRB2. Interacts with APPL2; interaction is independent of follicle stimulating hormone stimulation. N-glycosylated; indirectly required for FSH-binding, possibly via a conformational change that allows high affinity binding of hormone. Post-translationally, sulfated.

It localises to the cell membrane. Functionally, g protein-coupled receptor for follitropin, the follicle-stimulating hormone. Through cAMP production activates the downstream PI3K-AKT and ERK1/ERK2 signaling pathways. This chain is Follicle-stimulating hormone receptor (FSHR), found in Notamacropus eugenii (Tammar wallaby).